The primary structure comprises 118 residues: Ribosome-binding factor A (118 aa).

This sequence belongs to the RbfA family. Monomer. Binds 30S ribosomal subunits, but not 50S ribosomal subunits or 70S ribosomes.

Its subcellular location is the cytoplasm. Its function is as follows. One of several proteins that assist in the late maturation steps of the functional core of the 30S ribosomal subunit. Associates with free 30S ribosomal subunits (but not with 30S subunits that are part of 70S ribosomes or polysomes). Required for efficient processing of 16S rRNA. May interact with the 5'-terminal helix region of 16S rRNA. This is Ribosome-binding factor A from Geobacter sulfurreducens (strain ATCC 51573 / DSM 12127 / PCA).